A 97-amino-acid chain; its full sequence is Aspartyl/glutamyl-tRNA(Asn/Gln) amidotransferase subunit C (97 aa).

This sequence belongs to the GatC family. Heterotrimer of A, B and C subunits.

It catalyses the reaction L-glutamyl-tRNA(Gln) + L-glutamine + ATP + H2O = L-glutaminyl-tRNA(Gln) + L-glutamate + ADP + phosphate + H(+). The catalysed reaction is L-aspartyl-tRNA(Asn) + L-glutamine + ATP + H2O = L-asparaginyl-tRNA(Asn) + L-glutamate + ADP + phosphate + 2 H(+). In terms of biological role, allows the formation of correctly charged Asn-tRNA(Asn) or Gln-tRNA(Gln) through the transamidation of misacylated Asp-tRNA(Asn) or Glu-tRNA(Gln) in organisms which lack either or both of asparaginyl-tRNA or glutaminyl-tRNA synthetases. The reaction takes place in the presence of glutamine and ATP through an activated phospho-Asp-tRNA(Asn) or phospho-Glu-tRNA(Gln). This is Aspartyl/glutamyl-tRNA(Asn/Gln) amidotransferase subunit C from Synechococcus sp. (strain CC9605).